A 389-amino-acid chain; its full sequence is Pregnancy-associated glycoprotein 1 (389 aa).

A signal peptide spans 1–15; the sequence is MKWLVILGLVALSEC. A Peptidase A1 domain is found at 76-386; it reads YVGNITIGTP…DRGQNRIGLR (311 aa). N-linked (GlcNAc...) asparagine glycosylation is present at asparagine 79. The active site involves aspartate 94. An intrachain disulfide couples cysteine 107 to cysteine 112. N-linked (GlcNAc...) asparagine glycosylation occurs at asparagine 130. Cysteine 268 and cysteine 272 are disulfide-bonded. The active site involves aspartate 277. Cysteine 311 and cysteine 345 are oxidised to a cystine. Asparagine 348 is a glycosylation site (N-linked (GlcNAc...) asparagine).

Belongs to the peptidase A1 family. In terms of tissue distribution, expressed throughout the chorion, with the signal localized exclusively over the trophectoderm.

It is found in the secreted. The protein resides in the extracellular space. Its function is as follows. Appears to be proteolytically inactive. The sequence is that of Pregnancy-associated glycoprotein 1 from Sus scrofa (Pig).